The primary structure comprises 381 residues: E3 ubiquitin-protein ligase RNF13 (381 aa).

The first 34 residues, 1-34 (MLLSIGMLMLSATQVYTILTVQLFAFLNLLPVEA), serve as a signal peptide directing secretion. The Lumenal portion of the chain corresponds to 35–182 (DILAYNFENA…VPEFSLPLEY (148 aa)). The PA domain maps to 65–160 (KGFLINSKPE…GESSANSLKD (96 aa)). The N-linked (GlcNAc...) asparagine glycan is linked to Asn88. A helical membrane pass occupies residues 183–203 (YLIPFLIIVGICLILIVIFMI). Residues 204 to 381 (TKFVQDRHRA…ERDYNIANTV (178 aa)) are Cytoplasmic-facing. The RING-type; atypical zinc-finger motif lies at 240–282 (CAICLDEYEDGDKLRILPCSHAYHCKCVDPWLTKTKKTCPVCK). Residues 285 to 381 (VVPSQGDSDS…ERDYNIANTV (97 aa)) form a disordered region. Composition is skewed to acidic residues over residues 292–304 (SDSDTDSSQEENE) and 339–357 (SDYEEDDNEDTDSSDAENE).

As to quaternary structure, interacts with ERN1. In terms of processing, autoubiquitinated. As to expression, widely expressed (at protein level). In normal pancreas, expressed in islets, but not in ducts, nor in acini (at protein level).

It is found in the endoplasmic reticulum membrane. The protein resides in the late endosome membrane. The protein localises to the lysosome membrane. It localises to the nucleus inner membrane. The catalysed reaction is S-ubiquitinyl-[E2 ubiquitin-conjugating enzyme]-L-cysteine + [acceptor protein]-L-lysine = [E2 ubiquitin-conjugating enzyme]-L-cysteine + N(6)-ubiquitinyl-[acceptor protein]-L-lysine.. The protein operates within protein modification; protein ubiquitination. Functionally, E3 ubiquitin-protein ligase that regulates cell proliferation. Involved in apoptosis regulation. Mediates ER stress-induced activation of JNK signaling pathway and apoptosis by promoting ERN1 activation and splicing of XBP1 mRNA. Also involved in protein trafficking and localization. The polypeptide is E3 ubiquitin-protein ligase RNF13 (Homo sapiens (Human)).